Reading from the N-terminus, the 493-residue chain is 5'-3' exonuclease PLD3 (493 aa).

Over 1–37 (MSSKVEYKPIQPHEEAENHFLQHELHKVKARKYYRCA) the chain is Cytoplasmic. The chain crosses the membrane as a helical; Signal-anchor for type II membrane protein span at residues 38–58 (LVVAIIITLVFCILASQLLLF). The Lumenal segment spans residues 59 to 493 (PFLSITSQTT…LSSWKEKCIF (435 aa)). The N-linked (GlcNAc...) asparagine glycan is linked to asparagine 99. Residues 197–224 (TDGILHTKFWVVDNEHFYIGSANMDWRS) form the PLD phosphodiesterase 1 domain. Catalysis depends on residues histidine 202, lysine 204, and aspartate 209. Asparagine 237, asparagine 259, asparagine 269, asparagine 285, and asparagine 388 each carry an N-linked (GlcNAc...) asparagine glycan. The region spanning 412-438 (YARVNHNKYMVTDRVAYIGTSNWSGDY) is the PLD phosphodiesterase 2 domain. Residues histidine 417, lysine 419, and aspartate 424 contribute to the active site. Asparagine 433, asparagine 450, and asparagine 476 each carry an N-linked (GlcNAc...) asparagine glycan.

It belongs to the phospholipase D family. N-glycosylated. In terms of processing, proteolytically processed to a soluble form that is stable within endosomes and lysosomes. During transport through the secretory pathway becomes proteolysed by cysteine proteases, thereby releasing a stable soluble lysosomal lumenal polypeptide, whereas the transmembrane-bound fragment is rapidly degraded. Its transport route to lysosomes involves ubiquitination and the ESCRT complex. Post-translationally, ubiquitinated. Ubiquitination mediates sorting into lysosomes.

The protein localises to the endoplasmic reticulum membrane. Its subcellular location is the lysosome lumen. It is found in the early endosome membrane. It localises to the late endosome membrane. The protein resides in the golgi apparatus membrane. The protein localises to the endosome membrane. The enzyme catalyses Exonucleolytic cleavage in the 5'- to 3'-direction to yield nucleoside 3'-phosphates.. In terms of biological role, 5'-&gt;3' DNA exonuclease which digests single-stranded DNA (ssDNA). Regulates inflammatory cytokine responses via the degradation of nucleic acids, by reducing the concentration of ssDNA able to stimulate TLR9, a nucleotide-sensing receptor in collaboration with PLD4. May be important in myotube formation. Plays a role in lysosomal homeostasis. Involved in the regulation of endosomal protein sorting. This is 5'-3' exonuclease PLD3 (pld3) from Xenopus laevis (African clawed frog).